The primary structure comprises 143 residues: Anti-sigma F factor (143 aa).

The protein belongs to the anti-sigma-factor family.

The enzyme catalyses L-seryl-[protein] + ATP = O-phospho-L-seryl-[protein] + ADP + H(+). The catalysed reaction is L-threonyl-[protein] + ATP = O-phospho-L-threonyl-[protein] + ADP + H(+). Binds to sigma F and blocks its ability to form an RNA polymerase holoenzyme (E-sigma F). Phosphorylates SpoIIAA on a serine residue. This phosphorylation may enable SpoIIAA to act as an anti-anti-sigma factor that counteracts SpoIIAB and thus releases sigma F from inhibition. The polypeptide is Anti-sigma F factor (Caldanaerobacter subterraneus subsp. tengcongensis (strain DSM 15242 / JCM 11007 / NBRC 100824 / MB4) (Thermoanaerobacter tengcongensis)).